A 572-amino-acid chain; its full sequence is Transducin-like enhancer protein 6 (572 aa).

Disordered stretches follow at residues 1–30 (MTSR…SSPT), 92–121 (QSEE…SSFE), and 174–236 (KAKP…VQEP). Positions 14–30 (KSTSPCPGISNSESSPT) are enriched in polar residues. WD repeat units lie at residues 284–322 (AHGE…AEDR), 332–372 (TPGA…LHVK), 377–416 (CAGL…VVRD), 419–456 (GYPD…KPLE), 458–497 (QFKS…RHMV), 499–538 (QKDS…KVFE), and 540–571 (PEMS…YQIT). Ser510 carries the phosphoserine; by PKA modification.

It belongs to the WD repeat Groucho/TLE family. Homodimers. Component of the subcortical maternal complex (SCMC), at least composed of NLRP5, KHDC3, OOEP, and TLE6. Within the complex, interacts with NLRP5, KHDC3 and OOEP. The SCMC may facilitate translocation of its components between the nuclear and cytoplasmic compartments. As part of the SCMC interacts with the SCMC-associated protein ZBED3. As part of the SCMC interacts with the SCMC-associated protein NLRP4F. As part of the SCMC interacts with the SCMC-associated protein CFL1/Cofilin-1. Interacts with FOXG1/BF-1; the interaction inhibits TLE1 interaction with FOXG1/BF-1. Interacts with NFATC1. Interacts with PAX6. As to quaternary structure, component of the subcortical maternal complex (SCMC), at least composed of NLRP5, KHDC3L, OOEP, and TLE6 isoform 1. Within the complex, interacts with NLRP5, KHDC3L and OOEP. The SCMC may facilitate translocation of its components between the nuclear and cytoplasmic compartments.

Its subcellular location is the cytoplasm. It localises to the nucleus. Its function is as follows. Component of the subcortical maternal complex (SCMC), a multiprotein complex that plays a key role in early embryonic development. The SCMC complex is a structural constituent of cytoplasmic lattices, which consist in fibrous structures found in the cytoplasm of oocytes and preimplantation embryos. They are required to store maternal proteins critical for embryonic development, such as proteins that control epigenetic reprogramming of the preimplantation embryo, and prevent their degradation or activation. Also required for spermatogenesis: regulates spermatogonia proliferation and cell cycle progression, potentially via regulation of cell cycle regulatory genes such as; CEBPB, CEBPA, CSF3, PCNA, and CDK4. Suppresses FOXG1/BF-1-mediated transcriptional repression by inhibiting interaction of the transcriptional corepressor TLE1 with FOXG1 which promotes cortical neuron differentiation. Acts as a transcriptional corepressor of NFATC1-mediated gene expression by contributing to PAX6-mediated repression. Component of the subcortical maternal complex (SCMC), a multiprotein complex that plays a key role in early embryonic development. The sequence is that of Transducin-like enhancer protein 6 from Homo sapiens (Human).